Here is a 31-residue protein sequence, read N- to C-terminus: Photosystem II reaction center protein T (31 aa).

A helical membrane pass occupies residues 3 to 23 (SVAYILVLTMALSVIFFAIAF).

It belongs to the PsbT family. As to quaternary structure, PSII is composed of 1 copy each of membrane proteins PsbA, PsbB, PsbC, PsbD, PsbE, PsbF, PsbH, PsbI, PsbJ, PsbK, PsbL, PsbM, PsbT, PsbX, PsbY, PsbZ, Psb30/Ycf12, peripheral proteins PsbO, CyanoQ (PsbQ), PsbU, PsbV and a large number of cofactors. It forms dimeric complexes.

It localises to the cellular thylakoid membrane. Its function is as follows. Found at the monomer-monomer interface of the photosystem II (PS II) dimer, plays a role in assembly and dimerization of PSII. PSII is a light-driven water plastoquinone oxidoreductase, using light energy to abstract electrons from H(2)O, generating a proton gradient subsequently used for ATP formation. This chain is Photosystem II reaction center protein T, found in Microcystis aeruginosa (strain NIES-843 / IAM M-2473).